We begin with the raw amino-acid sequence, 375 residues long: Chaperone protein DnaJ (375 aa).

The J domain occupies 5-70 (DYYEVLGVNR…QKKGAYDRYG (66 aa)). Residues 134–212 (GAEKTIRIPT…CGGAGRVKKQ (79 aa)) form a CR-type zinc finger. Positions 147, 150, 164, 167, 186, 189, 200, and 203 each coordinate Zn(2+). 4 CXXCXGXG motif repeats span residues 147–154 (CGTCHGSG), 164–171 (CPTCGGAG), 186–193 (CPKCHGTG), and 200–207 (CGDCGGAG).

It belongs to the DnaJ family. In terms of assembly, homodimer. Requires Zn(2+) as cofactor.

It is found in the cytoplasm. Participates actively in the response to hyperosmotic and heat shock by preventing the aggregation of stress-denatured proteins and by disaggregating proteins, also in an autonomous, DnaK-independent fashion. Unfolded proteins bind initially to DnaJ; upon interaction with the DnaJ-bound protein, DnaK hydrolyzes its bound ATP, resulting in the formation of a stable complex. GrpE releases ADP from DnaK; ATP binding to DnaK triggers the release of the substrate protein, thus completing the reaction cycle. Several rounds of ATP-dependent interactions between DnaJ, DnaK and GrpE are required for fully efficient folding. Also involved, together with DnaK and GrpE, in the DNA replication of plasmids through activation of initiation proteins. This is Chaperone protein DnaJ from Azoarcus sp. (strain BH72).